Here is a 285-residue protein sequence, read N- to C-terminus: MEDYILKVEELNYNYSDGTHALKGINMNIKRGEVTAILGGNGVGKSTLFQNFNGILKPSSGRILFDNKPIDYSRKGIMKLRESIGIVFQDPDNQLFSASVYQDVSFGAVNMKLSEDEIRKRVDNALKRTSIEHLKNKPTHCLSFGQKKRVAIAGVLVMEPKVLILDEPTAGLDPMGVSEIMKLLVEMQKELGITIIIATHDIDIVPLYCDNVFVMKEGRVILQGNPKEVFAEKEVIRKVNLRLPRIGHLMEILKEKDGFVFDELDLTIGQARKTINSWKNKIFND.

Residues 6–242 enclose the ABC transporter domain; it reads LKVEELNYNY…KEVIRKVNLR (237 aa). Position 39 to 46 (39 to 46) interacts with ATP; sequence GGNGVGKS.

The protein belongs to the ABC transporter superfamily.

It localises to the cell membrane. Probably part of an ABC transporter complex. Responsible for energy coupling to the transport system. In Clostridium perfringens (strain 13 / Type A), this protein is Putative ABC transporter ATP-binding protein CPE0195.